A 636-amino-acid polypeptide reads, in one-letter code: Fructose-1,6-bisphosphatase class 3 (636 aa).

This sequence belongs to the FBPase class 3 family. Requires Mn(2+) as cofactor.

The catalysed reaction is beta-D-fructose 1,6-bisphosphate + H2O = beta-D-fructose 6-phosphate + phosphate. Its pathway is carbohydrate biosynthesis; gluconeogenesis. The sequence is that of Fructose-1,6-bisphosphatase class 3 from Streptococcus sanguinis (strain SK36).